The sequence spans 184 residues: Shikimate kinase (184 aa).

17 to 22 (GAGKTT) provides a ligand contact to ATP. Threonine 21 lines the Mg(2+) pocket. Substrate-binding residues include aspartate 39, arginine 63, and glycine 85. Position 123 (arginine 123) interacts with ATP. Arginine 142 is a substrate binding site.

It belongs to the shikimate kinase family. As to quaternary structure, monomer. Mg(2+) serves as cofactor.

Its subcellular location is the cytoplasm. The enzyme catalyses shikimate + ATP = 3-phosphoshikimate + ADP + H(+). It participates in metabolic intermediate biosynthesis; chorismate biosynthesis; chorismate from D-erythrose 4-phosphate and phosphoenolpyruvate: step 5/7. Functionally, catalyzes the specific phosphorylation of the 3-hydroxyl group of shikimic acid using ATP as a cosubstrate. This is Shikimate kinase from Burkholderia lata (strain ATCC 17760 / DSM 23089 / LMG 22485 / NCIMB 9086 / R18194 / 383).